A 154-amino-acid chain; its full sequence is UPF0178 protein RC1_2062 (154 aa).

This sequence belongs to the UPF0178 family.

The sequence is that of UPF0178 protein RC1_2062 from Rhodospirillum centenum (strain ATCC 51521 / SW).